The primary structure comprises 273 residues: Protein PERCC1 (273 aa).

Disordered regions lie at residues 18–84 (SHES…PETP) and 253–273 (GGSE…LAEV). Residues 28-56 (EAPEISEEEEEEEEEEEEEEEEEEVDQDQ) are compositionally biased toward acidic residues. The span at 67-83 (DSQSSGVVPQDPSSPET) shows a compositional bias: polar residues.

In terms of tissue distribution, specifically expressed in the stomach, pancreas and intestine. In gastrointestinal tissue, expression is primarily restricted to gastric G cells and duodenal enteroendocrine cells (EECs).

Functionally, plays a critical role in intestinal function by promoting the development of enteroendocrine cells (EECs) of the gastrointestinal tract and pancreas. It is thereby required for normal enteroendocrine peptide hormone secretion. The protein is Protein PERCC1 of Mus musculus (Mouse).